The primary structure comprises 90 residues: uncharacterized protein (90 aa).

This is an uncharacterized protein from Aedes vexans (Inland floodwater mosquito).